The following is a 200-amino-acid chain: MEPFKTHTGVGVPLRRSNVDTDQIIPAVYLKRVSRTGFEDALFAAWRADDDFILNNPHFRNGSVLVAGPDFGTGSSREHAVWALKDYGFRVVISSRFADIFRGNSGKQGLLAARCEQSDVELLWKVLETEPGTSVTVDLEARTVHAKDLTVPFEIDDYTRWRLLEGLDDIGLTLRQAETIDTFEKTRPSFKPATLPARAG.

This sequence belongs to the LeuD family. LeuD type 1 subfamily. In terms of assembly, heterodimer of LeuC and LeuD.

It carries out the reaction (2R,3S)-3-isopropylmalate = (2S)-2-isopropylmalate. The protein operates within amino-acid biosynthesis; L-leucine biosynthesis; L-leucine from 3-methyl-2-oxobutanoate: step 2/4. Catalyzes the isomerization between 2-isopropylmalate and 3-isopropylmalate, via the formation of 2-isopropylmaleate. The protein is 3-isopropylmalate dehydratase small subunit of Saccharopolyspora erythraea (strain ATCC 11635 / DSM 40517 / JCM 4748 / NBRC 13426 / NCIMB 8594 / NRRL 2338).